We begin with the raw amino-acid sequence, 694 residues long: ATP-dependent RNA helicase DHX33 (694 aa).

Residues 78-246 (LKELEANDTV…FNCKGMYLEG (169 aa)) enclose the Helicase ATP-binding domain. 91–98 (SETGSGKT) lines the ATP pocket. The DEAH box motif lies at 188–191 (DEAH). Residues 270 to 443 (TLFHIHRTTP…SMVLQLLALD (174 aa)) form the Helicase C-terminal domain.

The protein belongs to the DEAD box helicase family. DEAH subfamily.

Its subcellular location is the nucleus. It is found in the nucleolus. It carries out the reaction ATP + H2O = ADP + phosphate + H(+). Part of a translational control module, also containing pths/DDX47 and ais/DDX52, which coordinates germline stem cell differentiation with ribosome biogenesis during oogenesis. This module allows for coregulation of ribosomal proteins and non1/GTPBP4, a p53 repressor, preventing p53 stabilization, cell cycle arrest and loss of stem cell differentiation. The chain is ATP-dependent RNA helicase DHX33 from Drosophila melanogaster (Fruit fly).